Here is a 126-residue protein sequence, read N- to C-terminus: Ribosome-binding factor A (126 aa).

This sequence belongs to the RbfA family. As to quaternary structure, monomer. Binds 30S ribosomal subunits, but not 50S ribosomal subunits or 70S ribosomes.

The protein resides in the cytoplasm. In terms of biological role, one of several proteins that assist in the late maturation steps of the functional core of the 30S ribosomal subunit. Associates with free 30S ribosomal subunits (but not with 30S subunits that are part of 70S ribosomes or polysomes). Required for efficient processing of 16S rRNA. May interact with the 5'-terminal helix region of 16S rRNA. The sequence is that of Ribosome-binding factor A from Halorhodospira halophila (strain DSM 244 / SL1) (Ectothiorhodospira halophila (strain DSM 244 / SL1)).